The chain runs to 370 residues: Lipoyl synthase, mitochondrial (370 aa).

[4Fe-4S] cluster-binding residues include Cys-100, Cys-105, Cys-111, Cys-131, Cys-135, Cys-138, and Ser-346. Residues Asp-116–Leu-335 form the Radical SAM core domain.

This sequence belongs to the radical SAM superfamily. Lipoyl synthase family. It depends on [4Fe-4S] cluster as a cofactor.

Its subcellular location is the mitochondrion. The enzyme catalyses [[Fe-S] cluster scaffold protein carrying a second [4Fe-4S](2+) cluster] + N(6)-octanoyl-L-lysyl-[protein] + 2 oxidized [2Fe-2S]-[ferredoxin] + 2 S-adenosyl-L-methionine + 4 H(+) = [[Fe-S] cluster scaffold protein] + N(6)-[(R)-dihydrolipoyl]-L-lysyl-[protein] + 4 Fe(3+) + 2 hydrogen sulfide + 2 5'-deoxyadenosine + 2 L-methionine + 2 reduced [2Fe-2S]-[ferredoxin]. It functions in the pathway protein modification; protein lipoylation via endogenous pathway; protein N(6)-(lipoyl)lysine from octanoyl-[acyl-carrier-protein]: step 2/2. Catalyzes the radical-mediated insertion of two sulfur atoms into the C-6 and C-8 positions of the octanoyl moiety bound to the lipoyl domains of lipoate-dependent enzymes, thereby converting the octanoylated domains into lipoylated derivatives. The polypeptide is Lipoyl synthase, mitochondrial (lip5) (Schizosaccharomyces pombe (strain 972 / ATCC 24843) (Fission yeast)).